The following is a 992-amino-acid chain: RNA-binding motif protein, X-linked-like-3 (992 aa).

The RRM domain maps to 8–86 (EKLFVGGLNL…KAIMVAQTIK (79 aa)). Disordered stretches follow at residues 91 to 130 (SSRWVPPTPGSGSRSRFSHRTRGGGSSPQRPPSQGRPDDG), 144 to 169 (APMPRKRGPPPRHCASPPHKRRDPGD), 188 to 207 (PDYCPXRGDGNRNGYRGRDH), 278 to 385 (DHLP…DSSS), 397 to 511 (EEYQ…HRYR), 562 to 588 (SLDANSGGRSPNAYSGGHDSSSRSHRY), and 644 to 992 (NSGG…QSRY). A compositionally biased stretch (low complexity) spans 284 to 296 (YSGGRSSSSNSYS). Residues 297-316 (RSDRYGEEGCYEEYRGRSPD) are compositionally biased toward basic and acidic residues. Low complexity predominate over residues 318 to 334 (HSGGRNSSSNSYGQSHH). Residues 335 to 371 (YGGEGRYEEYRGRYEEYRGRSHEARSGGRSTDAHSGG) show a composition bias toward basic and acidic residues. Residues 454 to 471 (THSGGRSSSSNSYGQSHR) show a composition bias toward low complexity. Residues 472-488 (YGGEGHYEYRGRSHDAH) show a composition bias toward basic and acidic residues. Composition is skewed to polar residues over residues 564–574 (DANSGGRSPNA), 644–664 (NSGGCSPNAYSGGHDSSSQSH), and 752–774 (DANSGGRSPNAYSGGRDSSSNSY). The span at 785-798 (HYEEYRGRSHDTHS) shows a compositional bias: basic and acidic residues. Over residues 818-828 (GRNSFSNSYGQ) the composition is skewed to polar residues. Basic and acidic residues-rich tracts occupy residues 831-842 (HYGRGGRYEEYQ), 920-948 (SGDHDRSSNSYGRSDRYSRGRDRVGRPDR), and 981-992 (GRFERGEGQSRY).

This Pan troglodytes (Chimpanzee) protein is RNA-binding motif protein, X-linked-like-3 (RBMXL3).